The primary structure comprises 198 residues: Ribonuclease HII (198 aa).

Residues 10-198 (HLVAGVDEVG…PVKRALGLVS (189 aa)) enclose the RNase H type-2 domain. Asp16, Glu17, and Asp108 together coordinate a divalent metal cation.

Belongs to the RNase HII family. Requires Mn(2+) as cofactor. It depends on Mg(2+) as a cofactor.

It is found in the cytoplasm. It catalyses the reaction Endonucleolytic cleavage to 5'-phosphomonoester.. In terms of biological role, endonuclease that specifically degrades the RNA of RNA-DNA hybrids. The polypeptide is Ribonuclease HII (Salmonella paratyphi A (strain AKU_12601)).